The chain runs to 901 residues: Probable inorganic carbon transporter subunit DabA (901 aa).

The Zn(2+) site is built by C424, D426, H606, and C621.

The protein belongs to the inorganic carbon transporter (TC 9.A.2) DabA family. In terms of assembly, forms a complex with DabB. Requires Zn(2+) as cofactor.

It is found in the cell membrane. Its function is as follows. Part of an energy-coupled inorganic carbon pump. The polypeptide is Probable inorganic carbon transporter subunit DabA (Staphylococcus aureus (strain MRSA252)).